The primary structure comprises 552 residues: Olefin beta-lactone synthetase (552 aa).

ATP contacts are provided by residues 182 to 190 (TSGSTGVPK), 316 to 321 (TPYGAT), D425, and R440.

The protein belongs to the ATP-dependent AMP-binding enzyme family. Monomer.

It catalyses the reaction a (2R,3S)-2-alkyl-3-hydroxyalkanoate + ATP = a cis-3-alkyl-4-alkyloxetan-2-one + AMP + diphosphate. Its function is as follows. Involved in olefin biosynthesis. Catalyzes the conversion of beta-hydroxy acid substrates to beta-lactones in the presence of ATP. Can use all four stereoisomers of 2-hexyl-3-hydroxydecanoic acid. The polypeptide is Olefin beta-lactone synthetase (Stenotrophomonas maltophilia (strain K279a)).